Reading from the N-terminus, the 435-residue chain is D-aminoacyl-tRNA deacylase (435 aa).

This sequence belongs to the DtdA deacylase family. As to quaternary structure, monomer. Requires Zn(2+) as cofactor.

It carries out the reaction a D-aminoacyl-tRNA + H2O = a tRNA + a D-alpha-amino acid + H(+). The catalysed reaction is glycyl-tRNA(Ala) + H2O = tRNA(Ala) + glycine + H(+). Its function is as follows. D-aminoacyl-tRNA deacylase with broad substrate specificity. By recycling D-aminoacyl-tRNA to D-amino acids and free tRNA molecules, this enzyme counteracts the toxicity associated with the formation of D-aminoacyl-tRNA entities in vivo. The sequence is that of D-aminoacyl-tRNA deacylase from Methanosphaerula palustris (strain ATCC BAA-1556 / DSM 19958 / E1-9c).